A 785-amino-acid chain; its full sequence is Endonuclease MutS2 (785 aa).

An ATP-binding site is contributed by 334-341 (GPNTGGKT). Residues 710 to 785 (LDLRGYNVED…GVGATIAELK (76 aa)) form the Smr domain.

It belongs to the DNA mismatch repair MutS family. MutS2 subfamily. In terms of assembly, homodimer. Binds to stalled ribosomes, contacting rRNA.

Its function is as follows. Endonuclease that is involved in the suppression of homologous recombination and thus may have a key role in the control of bacterial genetic diversity. In terms of biological role, acts as a ribosome collision sensor, splitting the ribosome into its 2 subunits. Detects stalled/collided 70S ribosomes which it binds and splits by an ATP-hydrolysis driven conformational change. Acts upstream of the ribosome quality control system (RQC), a ribosome-associated complex that mediates the extraction of incompletely synthesized nascent chains from stalled ribosomes and their subsequent degradation. Probably generates substrates for RQC. The chain is Endonuclease MutS2 from Brevibacillus brevis (strain 47 / JCM 6285 / NBRC 100599).